We begin with the raw amino-acid sequence, 83 residues long: Small ribosomal subunit protein uS17 (83 aa).

It belongs to the universal ribosomal protein uS17 family. In terms of assembly, part of the 30S ribosomal subunit.

One of the primary rRNA binding proteins, it binds specifically to the 5'-end of 16S ribosomal RNA. The protein is Small ribosomal subunit protein uS17 of Francisella philomiragia subsp. philomiragia (strain ATCC 25017 / CCUG 19701 / FSC 153 / O#319-036).